The sequence spans 122 residues: Large ribosomal subunit protein uL14 (122 aa).

This sequence belongs to the universal ribosomal protein uL14 family. As to quaternary structure, part of the 50S ribosomal subunit. Forms a cluster with proteins L3 and L19. In the 70S ribosome, L14 and L19 interact and together make contacts with the 16S rRNA in bridges B5 and B8.

Binds to 23S rRNA. Forms part of two intersubunit bridges in the 70S ribosome. The polypeptide is Large ribosomal subunit protein uL14 (Ruthia magnifica subsp. Calyptogena magnifica).